Consider the following 143-residue polypeptide: Small ribosomal subunit protein eS12 (143 aa).

Glycyl lysine isopeptide (Lys-Gly) (interchain with G-Cter in ubiquitin) cross-links involve residues Lys-85, Lys-95, and Lys-114.

It belongs to the eukaryotic ribosomal protein eS12 family. Component of the small ribosomal subunit (SSU). Mature yeast ribosomes consist of a small (40S) and a large (60S) subunit. The 40S small subunit contains 1 molecule of ribosomal RNA (18S rRNA) and 33 different proteins (encoded by 57 genes). The large 60S subunit contains 3 rRNA molecules (25S, 5.8S and 5S rRNA) and 46 different proteins (encoded by 81 genes).

It localises to the cytoplasm. Its function is as follows. Component of the ribosome, a large ribonucleoprotein complex responsible for the synthesis of proteins in the cell. The small ribosomal subunit (SSU) binds messenger RNAs (mRNAs) and translates the encoded message by selecting cognate aminoacyl-transfer RNA (tRNA) molecules. The large subunit (LSU) contains the ribosomal catalytic site termed the peptidyl transferase center (PTC), which catalyzes the formation of peptide bonds, thereby polymerizing the amino acids delivered by tRNAs into a polypeptide chain. The nascent polypeptides leave the ribosome through a tunnel in the LSU and interact with protein factors that function in enzymatic processing, targeting, and the membrane insertion of nascent chains at the exit of the ribosomal tunnel. The polypeptide is Small ribosomal subunit protein eS12 (Saccharomyces cerevisiae (strain ATCC 204508 / S288c) (Baker's yeast)).